The primary structure comprises 363 residues: Ribosomal RNA large subunit methyltransferase M (363 aa).

S-adenosyl-L-methionine-binding positions include Ser190, Cys223–Gly226, Asp242, Asp262, and Asp280. Lys309 (proton acceptor) is an active-site residue.

Belongs to the class I-like SAM-binding methyltransferase superfamily. RNA methyltransferase RlmE family. RlmM subfamily. In terms of assembly, monomer.

Its subcellular location is the cytoplasm. The enzyme catalyses cytidine(2498) in 23S rRNA + S-adenosyl-L-methionine = 2'-O-methylcytidine(2498) in 23S rRNA + S-adenosyl-L-homocysteine + H(+). Functionally, catalyzes the 2'-O-methylation at nucleotide C2498 in 23S rRNA. The chain is Ribosomal RNA large subunit methyltransferase M from Actinobacillus pleuropneumoniae serotype 5b (strain L20).